Reading from the N-terminus, the 389-residue chain is Glycerol-3-phosphate dehydrogenase [NAD(+)] 2 (389 aa).

NAD(+) is bound by residues 40–45, Phe-128, Lys-151, and Ala-184; that span reads GSGNWG. Residue Lys-151 participates in substrate binding. Lys-244 functions as the Proton acceptor in the catalytic mechanism. NAD(+)-binding residues include Arg-309 and Gln-338. A substrate-binding site is contributed by 309-310; that stretch reads RN.

The protein belongs to the NAD-dependent glycerol-3-phosphate dehydrogenase family.

Its subcellular location is the cytoplasm. It carries out the reaction sn-glycerol 3-phosphate + NAD(+) = dihydroxyacetone phosphate + NADH + H(+). This Zygosaccharomyces rouxii protein is Glycerol-3-phosphate dehydrogenase [NAD(+)] 2 (GPD2).